A 569-amino-acid polypeptide reads, in one-letter code: Potassium-transporting ATPase potassium-binding subunit (569 aa).

A run of 10 helical transmembrane segments spans residues 3–23 (LMEY…SPVL), 68–88 (AASL…VLML), 136–156 (VGLA…AVAV), 179–199 (VLYV…GQGV), 259–279 (LQML…GGAV), 284–304 (HAWT…CSLY), 384–404 (GLYG…LMVG), 422–442 (AMLA…VAAV), 490–510 (IALA…GVAG), and 534–554 (LLLT…ALAL).

The protein belongs to the KdpA family. As to quaternary structure, the system is composed of three essential subunits: KdpA, KdpB and KdpC.

Its subcellular location is the cell inner membrane. Functionally, part of the high-affinity ATP-driven potassium transport (or Kdp) system, which catalyzes the hydrolysis of ATP coupled with the electrogenic transport of potassium into the cytoplasm. This subunit binds the periplasmic potassium ions and delivers the ions to the membrane domain of KdpB through an intramembrane tunnel. This is Potassium-transporting ATPase potassium-binding subunit from Nitratidesulfovibrio vulgaris (strain ATCC 29579 / DSM 644 / CCUG 34227 / NCIMB 8303 / VKM B-1760 / Hildenborough) (Desulfovibrio vulgaris).